Reading from the N-terminus, the 121-residue chain is Small ribosomal subunit protein uS13 (121 aa).

A disordered region spans residues 97–121 (PVRGQKTHSNARTRKGPRASRIKKK). Basic residues predominate over residues 101–121 (QKTHSNARTRKGPRASRIKKK).

The protein belongs to the universal ribosomal protein uS13 family. In terms of assembly, part of the 30S ribosomal subunit. Forms a loose heterodimer with protein S19. Forms two bridges to the 50S subunit in the 70S ribosome.

Functionally, located at the top of the head of the 30S subunit, it contacts several helices of the 16S rRNA. In the 70S ribosome it contacts the 23S rRNA (bridge B1a) and protein L5 of the 50S subunit (bridge B1b), connecting the 2 subunits; these bridges are implicated in subunit movement. Contacts the tRNAs in the A and P-sites. The sequence is that of Small ribosomal subunit protein uS13 from Kosmotoga olearia (strain ATCC BAA-1733 / DSM 21960 / TBF 19.5.1).